A 212-amino-acid chain; its full sequence is Inner membrane-spanning protein YciB (212 aa).

A run of 6 helical transmembrane segments spans residues 19–39 (FYGALPPEWILAVGVWLPVAL), 47–67 (AIYLATAVAMVVMAVQLALGL), 82–102 (AVILVLGGATLWLHDPVFILW), 105–122 (TLVNWLFALVFMAPPLFG), 147–167 (LAWVVFFLVSGLANLFVAYTF), and 177–197 (LFGMLGMTFVFVIGQAVYLGL).

Belongs to the YciB family.

The protein localises to the cell inner membrane. Plays a role in cell envelope biogenesis, maintenance of cell envelope integrity and membrane homeostasis. This chain is Inner membrane-spanning protein YciB, found in Thioalkalivibrio sulfidiphilus (strain HL-EbGR7).